Consider the following 210-residue polypeptide: Uracil phosphoribosyltransferase (210 aa).

Residues R78, R103, and D130–T138 contribute to the 5-phospho-alpha-D-ribose 1-diphosphate site. Residues I193 and G198–A200 each bind uracil. Residue D199 participates in 5-phospho-alpha-D-ribose 1-diphosphate binding.

It belongs to the UPRTase family. The cofactor is Mg(2+).

It catalyses the reaction UMP + diphosphate = 5-phospho-alpha-D-ribose 1-diphosphate + uracil. The protein operates within pyrimidine metabolism; UMP biosynthesis via salvage pathway; UMP from uracil: step 1/1. Its activity is regulated as follows. Allosterically activated by GTP. Its function is as follows. Catalyzes the conversion of uracil and 5-phospho-alpha-D-ribose 1-diphosphate (PRPP) to UMP and diphosphate. This chain is Uracil phosphoribosyltransferase, found in Xanthomonas euvesicatoria pv. vesicatoria (strain 85-10) (Xanthomonas campestris pv. vesicatoria).